We begin with the raw amino-acid sequence, 156 residues long: MSGGLLKALRSDSYVELSEYRDQHFRGDNEEQEKLLKKSCTLYVGNLSFYTTEEQIYELFSKSGDIKKIIMGLDKMKKTACGFCFVEYYSRADAENAMRYINGTRLDDRIIRTDWDAGFKEGRQYGRGRSGGQVRDEYREDYDAGRGGYGKLAQKQ.

Serine 2 carries the post-translational modification N-acetylserine. 2 positions are modified to phosphoserine: serine 13 and serine 18. MRNA-binding positions include tyrosine 20, tyrosine 43, 112 to 116 (RTDWD), 123 to 127 (RQYGR), and 133 to 134 (QV). An RRM domain is found at 40 to 118 (CTLYVGNLSF…RIIRTDWDAG (79 aa)). Residues 124–156 (QYGRGRSGGQVRDEYREDYDAGRGGYGKLAQKQ) are disordered. Basic and acidic residues predominate over residues 134-144 (VRDEYREDYDA). Arginine 146 bears the Omega-N-methylarginine mark.

It belongs to the RRM NCBP2 family. As to quaternary structure, component of the nuclear cap-binding complex (CBC), a heterodimer composed of NCBP1/CBP80 and NCBP2/CBP20 that interacts with m7GpppG-capped RNA. Found in a U snRNA export complex with PHAX/RNUXA, NCBP1/CBP80, NCBP2/CBP20, RAN, XPO1 and m7G-capped RNA. Interacts with PHAX/RNUXA, EIF4G1, HNRNPF, HNRNPH1 and ALYREF/THOC4/ALY. Interacts with SRRT/ARS2 and KPNA3.

It localises to the nucleus. Its subcellular location is the cytoplasm. In terms of biological role, component of the cap-binding complex (CBC), which binds co-transcriptionally to the 5' cap of pre-mRNAs and is involved in various processes such as pre-mRNA splicing, translation regulation, nonsense-mediated mRNA decay, RNA-mediated gene silencing (RNAi) by microRNAs (miRNAs) and mRNA export. The CBC complex is involved in mRNA export from the nucleus via its interaction with ALYREF/THOC4/ALY, leading to the recruitment of the mRNA export machinery to the 5' end of mRNA and to mRNA export in a 5' to 3' direction through the nuclear pore. The CBC complex is also involved in mediating U snRNA and intronless mRNAs export from the nucleus. The CBC complex is essential for a pioneer round of mRNA translation, before steady state translation when the CBC complex is replaced by cytoplasmic cap-binding protein eIF4E. The pioneer round of mRNA translation mediated by the CBC complex plays a central role in nonsense-mediated mRNA decay (NMD), NMD only taking place in mRNAs bound to the CBC complex, but not on eIF4E-bound mRNAs. The CBC complex enhances NMD in mRNAs containing at least one exon-junction complex (EJC) via its interaction with UPF1, promoting the interaction between UPF1 and UPF2. The CBC complex is also involved in 'failsafe' NMD, which is independent of the EJC complex, while it does not participate in Staufen-mediated mRNA decay (SMD). During cell proliferation, the CBC complex is also involved in microRNAs (miRNAs) biogenesis via its interaction with SRRT/ARS2, thereby being required for miRNA-mediated RNA interference. The CBC complex also acts as a negative regulator of PARN, thereby acting as an inhibitor of mRNA deadenylation. In the CBC complex, NCBP2/CBP20 recognizes and binds capped RNAs (m7GpppG-capped RNA) but requires NCBP1/CBP80 to stabilize the movement of its N-terminal loop and lock the CBC into a high affinity cap-binding state with the cap structure. The conventional cap-binding complex with NCBP2 binds both small nuclear RNA (snRNA) and messenger (mRNA) and is involved in their export from the nucleus. The sequence is that of Nuclear cap-binding protein subunit 2 (Ncbp2) from Mus musculus (Mouse).